A 430-amino-acid polypeptide reads, in one-letter code: Delta(14)-sterol reductase (430 aa).

6 consecutive transmembrane segments (helical) span residues 12-32 (IGTG…HFLI), 67-87 (LAVA…PAEI), 109-129 (FLVF…TWWF), 230-250 (FVSD…VDAL), 267-287 (LGVM…CLQA), and 290-310 (LASF…AVQF). NADP(+) is bound by residues Lys-323, Arg-327, Leu-350, Trp-355, and 362–363 (NY). A run of 2 helical transmembrane segments spans residues 349–369 (LLIS…DWIM) and 376–396 (TTGF…ILLL). NADP(+) contacts are provided by residues Asp-402, 406 to 410 (CREKY), and Tyr-417.

This sequence belongs to the ERG4/ERG24 family.

It localises to the membrane. It carries out the reaction 4,4-dimethyl-5alpha-cholesta-8,24-dien-3beta-ol + NADP(+) = 4,4-dimethyl-5alpha-cholesta-8,14,24-trien-3beta-ol + NADPH + H(+). The protein operates within steroid biosynthesis; zymosterol biosynthesis; zymosterol from lanosterol: step 2/6. Functionally, reduces the C14=C15 double bond of 4,4-dimethyl-cholesta-8,14,24-trienol to produce 4,4-dimethyl-cholesta-8,24-dienol. This is Delta(14)-sterol reductase (ERG3) from Ascobolus immersus.